The chain runs to 156 residues: Small ribosomal subunit protein uS7 (156 aa).

This sequence belongs to the universal ribosomal protein uS7 family. As to quaternary structure, part of the 30S ribosomal subunit. Contacts proteins S9 and S11.

Its function is as follows. One of the primary rRNA binding proteins, it binds directly to 16S rRNA where it nucleates assembly of the head domain of the 30S subunit. Is located at the subunit interface close to the decoding center, probably blocks exit of the E-site tRNA. This chain is Small ribosomal subunit protein uS7, found in Bacillus pumilus (strain SAFR-032).